A 372-amino-acid polypeptide reads, in one-letter code: Methylthioribose-1-phosphate isomerase 2 (372 aa).

The active-site Proton donor is aspartate 254.

This sequence belongs to the eIF-2B alpha/beta/delta subunits family. MtnA subfamily.

The protein localises to the cytoplasm. It is found in the nucleus. The enzyme catalyses 5-(methylsulfanyl)-alpha-D-ribose 1-phosphate = 5-(methylsulfanyl)-D-ribulose 1-phosphate. The protein operates within amino-acid biosynthesis; L-methionine biosynthesis via salvage pathway; L-methionine from S-methyl-5-thio-alpha-D-ribose 1-phosphate: step 1/6. Functionally, catalyzes the interconversion of methylthioribose-1-phosphate (MTR-1-P) into methylthioribulose-1-phosphate (MTRu-1-P). The sequence is that of Methylthioribose-1-phosphate isomerase 2 from Trypanosoma cruzi (strain CL Brener).